A 319-amino-acid chain; its full sequence is MKPENKLPVLDLISAEMKTVVNTLQPDLPSWPATGTIAEQRQYYTLERRFWNAGAPEMATRAYMVPTKYGQVETRLFCPQPDSPATLFYLHGGGFILGNLDTHDRIMRLLASYSQCTVIGIDYPLSPEARFPQAIEEIVAACCYFHQQAEDYQINMSRIGFAGDSAGAMLALASALWLRDKQIDCGKIAGVLLWYGLYGLRDSVTRRLLGGVWDGLTQQDLQMYEEAYLSNDADRESPYYCLFNNDLTREVPPCFIAGAEFDPLLDDSRLLYQTLAAHQQPCEFKLYPGTLHVFLHYSRMMKTADEALRDGAQFFTAQL.

The Involved in the stabilization of the negatively charged intermediate by the formation of the oxyanion hole motif lies at 91 to 93; the sequence is HGG. Active-site residues include Ser-165, Asp-262, and His-292.

Belongs to the 'GDXG' lipolytic enzyme family. Homodimer. Interacts with MalT and MelA.

It localises to the cytoplasm. Its function is as follows. Displays esterase activity towards short chain fatty esters (acyl chain length of up to 8 carbons). Able to hydrolyze triacetylglycerol (triacetin) and tributyrylglycerol (tributyrin), but not trioleylglycerol (triolein) or cholesterol oleate. Negatively regulates MalT activity by antagonizing maltotriose binding. Inhibits MelA galactosidase activity. In Shigella boydii serotype 18 (strain CDC 3083-94 / BS512), this protein is Acetyl esterase.